Here is a 207-residue protein sequence, read N- to C-terminus: Holliday junction resolvase RecU (207 aa).

Residues 1-30 (MPIRYPNGQPYSRSPKQGQAKKPLPADTYS) are disordered. 4 residues coordinate Mg(2+): Thr87, Asp89, Glu102, and Gln121.

This sequence belongs to the RecU family. It depends on Mg(2+) as a cofactor.

It localises to the cytoplasm. It catalyses the reaction Endonucleolytic cleavage at a junction such as a reciprocal single-stranded crossover between two homologous DNA duplexes (Holliday junction).. In terms of biological role, endonuclease that resolves Holliday junction intermediates in genetic recombination. Cleaves mobile four-strand junctions by introducing symmetrical nicks in paired strands. Promotes annealing of linear ssDNA with homologous dsDNA. Required for DNA repair, homologous recombination and chromosome segregation. The sequence is that of Holliday junction resolvase RecU from Shouchella clausii (strain KSM-K16) (Alkalihalobacillus clausii).